The following is a 170-amino-acid chain: MARVEL domain-containing protein 1 (170 aa).

The Cytoplasmic segment spans residues 1 to 38 (MEGERPRSDTVTTTVSSHMETISLGGSIAYDRSFLRSP). One can recognise an MARVEL domain in the interval 34–167 (FLRSPTGVLL…STYFSFQAWR (134 aa)). A helical membrane pass occupies residues 39–59 (TGVLLLMEIMFGLLVWALIAG). At 60-67 (SEYFLFSA) the chain is on the extracellular side. The helical transmembrane segment at 68-88 (FGWVMFVAVFYWVLSVFFFLL) threads the bilayer. Residues 89 to 102 (HLTRANTRITKVPW) are Cytoplasmic-facing. The chain crosses the membrane as a helical span at residues 103–123 (SLVGLCFNGSAFVLYLIAAVV). Over 124 to 145 (EASSVNKDVHQHHNYNSWTASS) the chain is Extracellular. The helical transmembrane segment at 146–166 (FFAFIVTVCYALSTYFSFQAW) threads the bilayer. Residues 167–170 (RTKS) lie on the Cytoplasmic side of the membrane.

It is found in the membrane. The protein resides in the nucleus. The protein is MARVEL domain-containing protein 1 (marveld1) of Xenopus laevis (African clawed frog).